The chain runs to 252 residues: MPEPTPTAYPVRLDELINAIKRVHSDVLDQLSDAVLAAEHLGEIADHLIGHFVDQARRSGASWSDIGKSMGVTKQAAQKRFVPRAEATTLDSNQGFRRFTPRARNAVVAAQNAAHGAASSEITPDHLLLGVLTDPAALATALLQQQEIDIATLRTAVTLPPAVTEPPQPIPFSGPARKVLELTFREALRLGHNYIGTEHLLLALLELEDGDGPLHRSGVDKSRAEADLITTLASLTGANAAGATDAGATDAG.

The Clp R domain occupies 96-238 (FRRFTPRARN…ITTLASLTGA (143 aa)). 2 repeat regions span residues 99-164 (FTPR…PAVT) and 172-238 (FSGP…LTGA).

This sequence belongs to the ClpA/ClpB family. ClpC subfamily.

This is an uncharacterized protein from Mycobacterium bovis (strain ATCC BAA-935 / AF2122/97).